The chain runs to 171 residues: 3-hydroxydecanoyl-[acyl-carrier-protein] dehydratase (171 aa).

Residue H70 is part of the active site.

The protein belongs to the thioester dehydratase family. FabA subfamily. In terms of assembly, homodimer.

It localises to the cytoplasm. It carries out the reaction a (3R)-hydroxyacyl-[ACP] = a (2E)-enoyl-[ACP] + H2O. The catalysed reaction is (3R)-hydroxydecanoyl-[ACP] = (2E)-decenoyl-[ACP] + H2O. The enzyme catalyses (2E)-decenoyl-[ACP] = (3Z)-decenoyl-[ACP]. It functions in the pathway lipid metabolism; fatty acid biosynthesis. Functionally, necessary for the introduction of cis unsaturation into fatty acids. Catalyzes the dehydration of (3R)-3-hydroxydecanoyl-ACP to E-(2)-decenoyl-ACP and then its isomerization to Z-(3)-decenoyl-ACP. Can catalyze the dehydratase reaction for beta-hydroxyacyl-ACPs with saturated chain lengths up to 16:0, being most active on intermediate chain length. The sequence is that of 3-hydroxydecanoyl-[acyl-carrier-protein] dehydratase from Xanthomonas euvesicatoria pv. vesicatoria (strain 85-10) (Xanthomonas campestris pv. vesicatoria).